A 905-amino-acid chain; its full sequence is Clumping factor B (905 aa).

A signal peptide spans 1–44; that stretch reads MKKRIDYLSNKQNKYSIRRFTVGTTSVIVGATILFGIGNHQAQA. A YSIRK-G/S signaling motif motif is present at residues 15–26; sequence YSIRRFTVGTTS. Composition is skewed to polar residues over residues 44 to 61 and 68 to 101; these read ASEQ…NASA and MIET…KPMS. The segment at 44-191 is disordered; it reads ASEQSNDTTQ…AQGTSKPSVR (148 aa). Residues 45-542 are ligand binding A region; it reads SEQSNDTTQS…GSADGDSAVN (498 aa). Over residues 102–119 the composition is skewed to low complexity; sequence TQTSNTTTTEPASTNETP. A compositionally biased stretch (polar residues) spans 134–189; that stretch reads QDQTVPQEANSQVDNKTTNDANSIATNSELKNPQTLDLPQSSPQTISNAQGTSKPS. The MIDAS-like motif signature appears at 272-276; that stretch reads DYSNS. The disordered stretch occupies residues 530–877; the sequence is YGGGSADGDS…ETGDKSENTN (348 aa). Residues 545 to 555 are compositionally biased toward pro residues; that stretch reads DPTPGPPVDPE. Positions 556–829 are enriched in acidic residues; sequence PSPDPEPEPS…SDSDSDSDSD (274 aa). A compositionally biased stretch (polar residues) spans 833–844; sequence RVTPPNNEQKAP. A compositionally biased stretch (basic and acidic residues) spans 861–874; that stretch reads HKTDALPETGDKSE. Positions 866–870 match the LPXTG sorting signal motif; that stretch reads LPETG. Residue Thr-869 is modified to Pentaglycyl murein peptidoglycan amidated threonine. Residues 870–905 constitute a propeptide, removed by sortase; that stretch reads GDKSENTNATLFGAMMALLGSLLLFRKRKQDHKEKA.

It belongs to the serine-aspartate repeat-containing protein (SDr) family. In terms of processing, proteolytically cleaved by aureolysin (aur). This cleavage leads to the inactivation of ClfB.

The protein localises to the secreted. Its subcellular location is the cell wall. Its function is as follows. Cell surface-associated protein implicated in virulence by promoting bacterial attachment to both alpha- and beta-chains of human fibrinogen and inducing the formation of bacterial clumps. This Staphylococcus aureus (strain MSSA476) protein is Clumping factor B (clfB).